We begin with the raw amino-acid sequence, 94 residues long: Small ribosomal subunit protein uS19 (94 aa).

It belongs to the universal ribosomal protein uS19 family.

Functionally, protein S19 forms a complex with S13 that binds strongly to the 16S ribosomal RNA. The protein is Small ribosomal subunit protein uS19 of Dictyoglomus turgidum (strain DSM 6724 / Z-1310).